Here is a 140-residue protein sequence, read N- to C-terminus: ATP synthase epsilon chain (140 aa).

The protein belongs to the ATPase epsilon chain family. F-type ATPases have 2 components, CF(1) - the catalytic core - and CF(0) - the membrane proton channel. CF(1) has five subunits: alpha(3), beta(3), gamma(1), delta(1), epsilon(1). CF(0) has three main subunits: a, b and c.

Its subcellular location is the cell inner membrane. Produces ATP from ADP in the presence of a proton gradient across the membrane. The sequence is that of ATP synthase epsilon chain from Legionella pneumophila (strain Paris).